A 296-amino-acid polypeptide reads, in one-letter code: DNA-3-methyladenine glycosylase (296 aa).

Phosphoserine is present on S110. D209 acts as the Proton acceptor in catalysis.

Belongs to the alkylbase DNA glycosidase AlkA family.

It localises to the nucleus. The enzyme catalyses Hydrolysis of alkylated DNA, releasing 3-methyladenine, 3-methylguanine, 7-methylguanine and 7-methyladenine.. In terms of biological role, hydrolysis of the deoxyribose N-glycosidic bond to excise 3-methyladenine or 7-methyladenine from the damaged DNA polymer formed by alkylation lesions. The polypeptide is DNA-3-methyladenine glycosylase (MAG1) (Saccharomyces cerevisiae (strain ATCC 204508 / S288c) (Baker's yeast)).